The chain runs to 129 residues: Large ribosomal subunit protein bL12 (129 aa).

It belongs to the bacterial ribosomal protein bL12 family. In terms of assembly, homodimer. Part of the ribosomal stalk of the 50S ribosomal subunit. Forms a multimeric L10(L12)X complex, where L10 forms an elongated spine to which 2 to 4 L12 dimers bind in a sequential fashion. Binds GTP-bound translation factors.

Its function is as follows. Forms part of the ribosomal stalk which helps the ribosome interact with GTP-bound translation factors. Is thus essential for accurate translation. The chain is Large ribosomal subunit protein bL12 from Pseudothermotoga lettingae (strain ATCC BAA-301 / DSM 14385 / NBRC 107922 / TMO) (Thermotoga lettingae).